We begin with the raw amino-acid sequence, 338 residues long: Protein RecA (338 aa).

An ATP-binding site is contributed by 68–75 (GPESSGKT).

It belongs to the RecA family.

The protein localises to the cytoplasm. Can catalyze the hydrolysis of ATP in the presence of single-stranded DNA, the ATP-dependent uptake of single-stranded DNA by duplex DNA, and the ATP-dependent hybridization of homologous single-stranded DNAs. It interacts with LexA causing its activation and leading to its autocatalytic cleavage. The chain is Protein RecA from Citrifermentans bemidjiense (strain ATCC BAA-1014 / DSM 16622 / JCM 12645 / Bem) (Geobacter bemidjiensis).